The following is a 31-amino-acid chain: PTEN upstream open reading frame MP31 (31 aa).

In terms of assembly, interacts with lactate dehydrogenases LDHA and LDHB; interaction with mitochondrial LDH leads to inhibition of lactate dehydrogenase activity, preventing conversion of lactate to pyruvate. As to expression, expressed in brain (at protein level). Expressed at lower levels in glioblastomas than in normal brain tissue (at protein level).

It localises to the mitochondrion. Its function is as follows. Inhibits lactate dehydrogenase (LDH)-mediated conversion of lactate to pyruvate in mitochondria by competing with mitochondrial LDH for binding to NAD(+). Also inhibits cellular lactate utilization. In Homo sapiens (Human), this protein is PTEN upstream open reading frame MP31.